The primary structure comprises 395 residues: Probable alcohol dehydrogenase EutG (395 aa).

NAD(+)-binding positions include Asp-57, 116–120 (GSVLD), 156–160 (TTAGT), Lys-178, and 197–201 (VTEGV). Fe cation-binding residues include Asp-212, His-216, His-281, and His-295. NAD(+) is bound by residues His-295 and Asp-354.

This sequence belongs to the iron-containing alcohol dehydrogenase family. The cofactor is Fe cation.

It localises to the bacterial microcompartment. It catalyses the reaction ethanol + NAD(+) = acetaldehyde + NADH + H(+). Its pathway is amine and polyamine degradation; ethanolamine degradation. Functionally, probably acts on the acetaldehyde produced by the degradation of ethanolamine, producing ethanol. Expression of the eut operon allows this bacteria to use ethanolamine (EA) as a carbon, nitrogen and energy source. It relies on cobalamin (vitamin B12) both as a cofactor for the ethanolamine ammonia-lyase (EAL) activity and to induce the operon. EA enhances bacterial survival in macrophages in a concentration-dependent manner, suggesting it is an important nutrient during infection. The chain is Probable alcohol dehydrogenase EutG from Salmonella typhimurium (strain LT2 / SGSC1412 / ATCC 700720).